We begin with the raw amino-acid sequence, 279 residues long: Peptide deformylase 1B, chloroplastic (279 aa).

Fe cation contacts are provided by Cys-177 and His-219. Residue Glu-220 is part of the active site. Fe cation is bound at residue His-223.

It belongs to the polypeptide deformylase family. Fe(2+) is required as a cofactor.

The protein localises to the plastid. The protein resides in the chloroplast. The enzyme catalyses N-terminal N-formyl-L-methionyl-[peptide] + H2O = N-terminal L-methionyl-[peptide] + formate. In terms of biological role, removes the formyl group from the N-terminal Met of newly synthesized proteins. The sequence is that of Peptide deformylase 1B, chloroplastic (PDF1B) from Solanum lycopersicum (Tomato).